A 62-amino-acid polypeptide reads, in one-letter code: Temporin-1PLa (62 aa).

The signal sequence occupies residues 1–22 (MFTSKKSLLLLFFLGTINLSLC). A propeptide spanning residues 23–45 (EEERDADEEERRDDPDEMNVEVE) is cleaved from the precursor. At isoleucine 60 the chain carries Isoleucine amide.

As to expression, expressed by the skin glands.

Its subcellular location is the secreted. In terms of biological role, antimicrobial activity against the Gram-positive bacterium S.aureus. The protein is Temporin-1PLa of Lithobates palustris (Pickerel frog).